The primary structure comprises 358 residues: UDP-N-acetylglucosamine--N-acetylmuramyl-(pentapeptide) pyrophosphoryl-undecaprenol N-acetylglucosamine transferase (358 aa).

UDP-N-acetyl-alpha-D-glucosamine is bound by residues 10–12, Asn-124, Arg-165, Ser-191, Ile-246, and Gln-291; that span reads TGG.

It belongs to the glycosyltransferase 28 family. MurG subfamily.

It localises to the cell inner membrane. It catalyses the reaction di-trans,octa-cis-undecaprenyl diphospho-N-acetyl-alpha-D-muramoyl-L-alanyl-D-glutamyl-meso-2,6-diaminopimeloyl-D-alanyl-D-alanine + UDP-N-acetyl-alpha-D-glucosamine = di-trans,octa-cis-undecaprenyl diphospho-[N-acetyl-alpha-D-glucosaminyl-(1-&gt;4)]-N-acetyl-alpha-D-muramoyl-L-alanyl-D-glutamyl-meso-2,6-diaminopimeloyl-D-alanyl-D-alanine + UDP + H(+). The protein operates within cell wall biogenesis; peptidoglycan biosynthesis. In terms of biological role, cell wall formation. Catalyzes the transfer of a GlcNAc subunit on undecaprenyl-pyrophosphoryl-MurNAc-pentapeptide (lipid intermediate I) to form undecaprenyl-pyrophosphoryl-MurNAc-(pentapeptide)GlcNAc (lipid intermediate II). The chain is UDP-N-acetylglucosamine--N-acetylmuramyl-(pentapeptide) pyrophosphoryl-undecaprenol N-acetylglucosamine transferase from Citrifermentans bemidjiense (strain ATCC BAA-1014 / DSM 16622 / JCM 12645 / Bem) (Geobacter bemidjiensis).